A 289-amino-acid polypeptide reads, in one-letter code: Pantothenate synthetase (289 aa).

30–37 contacts ATP; the sequence is MGYLHEGH. His-37 acts as the Proton donor in catalysis. A (R)-pantoate-binding site is contributed by Gln-61. Residue Gln-61 coordinates beta-alanine. 147 to 150 provides a ligand contact to ATP; that stretch reads GLKD. Gln-153 is a (R)-pantoate binding site. Residues Val-176 and 184 to 187 each bind ATP; that span reads KSSR.

This sequence belongs to the pantothenate synthetase family. In terms of assembly, homodimer.

It localises to the cytoplasm. It carries out the reaction (R)-pantoate + beta-alanine + ATP = (R)-pantothenate + AMP + diphosphate + H(+). It functions in the pathway cofactor biosynthesis; (R)-pantothenate biosynthesis; (R)-pantothenate from (R)-pantoate and beta-alanine: step 1/1. Its function is as follows. Catalyzes the condensation of pantoate with beta-alanine in an ATP-dependent reaction via a pantoyl-adenylate intermediate. This Geobacillus thermodenitrificans (strain NG80-2) protein is Pantothenate synthetase.